The primary structure comprises 294 residues: MFKGSIPALITPFTDNGSVDEKAFAAHVEWQIAEGSNGLVPVGTTGESPTLSHDEHKRVVELCIEVAAKRVPVIAGAGSNNTDEAIELALHAQEAGADALLVVTPYYNKPTQKGLFAHFSAVAEAVKLPIVIYNIPPRSVVDMSPETMGALVKAHKNIIGVKDATGKLDRVSEQRISCGKDFVQLSGEDGTALGFNAHGGVGCISVTANVAPRLCSEFQAAMLAGDYAKALEYQDRLMPLHRAIFMEPGVCGTKYALSKTRGGNRRVRSPLMSTLEPATEAAIDAALKHAGLMN.

Threonine 45 lines the pyruvate pocket. The active-site Proton donor/acceptor is tyrosine 133. Residue lysine 162 is the Schiff-base intermediate with substrate of the active site. Isoleucine 204 contributes to the pyruvate binding site.

It belongs to the DapA family. In terms of assembly, homotetramer; dimer of dimers.

Its subcellular location is the cytoplasm. The catalysed reaction is L-aspartate 4-semialdehyde + pyruvate = (2S,4S)-4-hydroxy-2,3,4,5-tetrahydrodipicolinate + H2O + H(+). The protein operates within amino-acid biosynthesis; L-lysine biosynthesis via DAP pathway; (S)-tetrahydrodipicolinate from L-aspartate: step 3/4. Is allosterically regulated by the feedback inhibitor (S)-lysine. Catalyzes the condensation of (S)-aspartate-beta-semialdehyde [(S)-ASA] and pyruvate to 4-hydroxy-tetrahydrodipicolinate (HTPA). The polypeptide is 4-hydroxy-tetrahydrodipicolinate synthase (Agrobacterium fabrum (strain C58 / ATCC 33970) (Agrobacterium tumefaciens (strain C58))).